Consider the following 396-residue polypeptide: Acetyl-CoA acetyltransferase ERG10, cytosolic (396 aa).

Cys91 acts as the Acyl-thioester intermediate in catalysis. Tyr186 is a K(+) binding site. 2 residues coordinate CoA: Asn227 and Lys230. Residues Ala246, Pro247, and Val347 each contribute to the K(+) site. Active-site proton acceptor residues include His351 and Cys381. Asn382 contributes to the chloride binding site.

This sequence belongs to the thiolase-like superfamily. Thiolase family. As to quaternary structure, homotetramer. K(+) is required as a cofactor.

It is found in the cytoplasm. The protein localises to the cytosol. The catalysed reaction is 2 acetyl-CoA = acetoacetyl-CoA + CoA. The protein operates within metabolic intermediate biosynthesis; (R)-mevalonate biosynthesis; (R)-mevalonate from acetyl-CoA: step 1/3. Acetyl-CoA acetyltransferase; part of the first module of ergosterol biosynthesis pathway that includes the early steps of the pathway, conserved across all eukaryotes, and which results in the formation of mevalonate from acetyl-coenzyme A (acetyl-CoA). ERG10B catalyzes the formation of acetoacetyl-CoA from acetyl-CoA. The first module starts with the action of the cytosolic acetyl-CoA acetyltransferase ERG10B that catalyzes the formation of acetoacetyl-CoA. The hydroxymethylglutaryl-CoA synthases ERG13 then condenses acetyl-CoA with acetoacetyl-CoA to form HMG-CoA. The rate-limiting step of the early module is the reduction to mevalonate by the 3-hydroxy-3-methylglutaryl-coenzyme A (HMG-CoA) reductases HMG1. This chain is Acetyl-CoA acetyltransferase ERG10, cytosolic, found in Gibberella zeae (strain ATCC MYA-4620 / CBS 123657 / FGSC 9075 / NRRL 31084 / PH-1) (Wheat head blight fungus).